The chain runs to 391 residues: Phosphoglycerate kinase (391 aa).

Residues 21–23 (DLN), arginine 36, 59–62 (HLGR), arginine 113, and arginine 146 contribute to the substrate site. Residues lysine 197, glutamate 319, and 345–348 (GGDT) each bind ATP.

It belongs to the phosphoglycerate kinase family. Monomer.

The protein localises to the cytoplasm. It catalyses the reaction (2R)-3-phosphoglycerate + ATP = (2R)-3-phospho-glyceroyl phosphate + ADP. The protein operates within carbohydrate degradation; glycolysis; pyruvate from D-glyceraldehyde 3-phosphate: step 2/5. The sequence is that of Phosphoglycerate kinase from Colwellia psychrerythraea (strain 34H / ATCC BAA-681) (Vibrio psychroerythus).